A 167-amino-acid chain; its full sequence is Small ribosomal subunit protein uS5 (167 aa).

Positions 12 to 75 (IEDRVVAINR…ETARKSLIEV (64 aa)) constitute an S5 DRBM domain.

The protein belongs to the universal ribosomal protein uS5 family. As to quaternary structure, part of the 30S ribosomal subunit. Contacts proteins S4 and S8.

With S4 and S12 plays an important role in translational accuracy. In terms of biological role, located at the back of the 30S subunit body where it stabilizes the conformation of the head with respect to the body. The polypeptide is Small ribosomal subunit protein uS5 (Pediococcus pentosaceus (strain ATCC 25745 / CCUG 21536 / LMG 10740 / 183-1w)).